The chain runs to 72 residues: Large ribosomal subunit protein bL31c (72 aa).

It belongs to the bacterial ribosomal protein bL31 family. Type A subfamily. In terms of assembly, part of the 50S ribosomal subunit.

The protein resides in the plastid. It localises to the chloroplast. In terms of biological role, binds the 23S rRNA. The chain is Large ribosomal subunit protein bL31c from Guillardia theta (Cryptophyte).